The following is a 730-amino-acid chain: Polyphosphate kinase (730 aa).

The segment covering 1 to 21 (MMRHDRNVTEIDAETRPDENL) has biased composition (basic and acidic residues). A disordered region spans residues 1–39 (MMRHDRNVTEIDAETRPDENLWHSGDSAVGAPPAATPAA). Position 86 (asparagine 86) interacts with ATP. Mg(2+)-binding residues include arginine 423 and arginine 453. The Phosphohistidine intermediate role is filled by histidine 483. ATP is bound by residues tyrosine 516, arginine 612, and histidine 640.

Belongs to the polyphosphate kinase 1 (PPK1) family. It depends on Mg(2+) as a cofactor. In terms of processing, an intermediate of this reaction is the autophosphorylated ppk in which a phosphate is covalently linked to a histidine residue through a N-P bond.

The catalysed reaction is [phosphate](n) + ATP = [phosphate](n+1) + ADP. Catalyzes the reversible transfer of the terminal phosphate of ATP to form a long-chain polyphosphate (polyP). This is Polyphosphate kinase from Mycobacterium avium (strain 104).